The sequence spans 183 residues: Extracellular superoxide dismutase [Cu-Zn] (183 aa).

The signal sequence occupies residues 1 to 32 (MTMLQQILLISVIIGTVHVHEVDCANEVLKAR). An N-linked (GlcNAc...) asparagine glycan is attached at N63. The Cu cation site is built by H77, H79, and H94. A disulfide bond links C88 and C177. 4 residues coordinate Zn(2+): H94, H102, H111, and D114. H151 serves as a coordination point for Cu cation.

It belongs to the Cu-Zn superoxide dismutase family. Cu cation is required as a cofactor. Requires Zn(2+) as cofactor.

The protein localises to the secreted. The protein resides in the extracellular space. The catalysed reaction is 2 superoxide + 2 H(+) = H2O2 + O2. Its function is as follows. Destroys radicals which are normally produced within the cells and which are toxic to biological systems. The polypeptide is Extracellular superoxide dismutase [Cu-Zn] (SOD) (Haemonchus contortus (Barber pole worm)).